The primary structure comprises 1479 residues: MKPRLLTTVTTWLALVLPVVYLSRPCQALPTVNFTANYANSTSIASYNLEPEIPYEELEEPRVLPLKAVLPVEASTVDSSGVIDASKSEHHELPLADAAIQPHPDSNSVLKVILEQPESNDEPVTSTHGYPTFSADDNFVPSKPLNLSVLEVTSTTIKITWREPEKLNGAIHGYRVYYVHQNQTLLHLPILKAEAAVNSVYTYTLSNLKPYTDYKIIVAAFTKKFDGEPSEVSQRTDIAGPSAPKVVNLTCHSQDALFFGWRIPQTYYNTIDYYIISYRNVVYADFREIRITANASIVETSMIIPNLTTNSLYEVKVRAASTSVINPKQIILGSYSEPKKINVQLNCEKIPPPSQRQSYNDYNLAVMIGILICCFGLLFIVLTILLWKKCFHAAYYYLDDPPACGNSGGGNSAGIVDWEAPCEVAGEMRSSIPVCEFAKHVAALHVDGDIGFSKEYEAIQGEALNDEYPSEHSQHPDNKAKNRYLNVIAYDHSRVHLRQVPGQKKHLDYINANFIDGYQKPRAFIGTQGPLPCTFDCFWRMIWEQRVAIIVMITNLVERGRRKCDMYWPKDGTEMYGVIAVKLIREEVMATYTVRTFQIKHTKLKKKKASQTEKLVYQYHYTNWPDHGTPDHPLPVINFVKKSTAANPADAGPIVVHCSAGVGRTGTYIVIDAMLKQIEAKNQLNVFGFLRYIRAQRNYLVQTEEQYIFIHDALVEAIDSGETNIKMDAIGGVVNHIEFIDSQYKLITSYQPKEINLTSALKPVNAIKNRSSLVPLEGSRVHLTPKPGVEGSDYINATWLHGYRRLRDFIVTQHPLIDTFKDFWQMVWDHNAQTVVLLSSADNMSFLQFWPNESEPIESDYYRIRLVSETSENDYIVRNFVIQSIQDDYELSVRMFENPMWPDMAQPRSIFDFAVRVHERCAEYRNGPIVIVDRYGGFQACQFCCISSLAMQLEYDQTANVYTYAKLFHNKRPGIWSSYEDIRQIYRILSYMPKELGLLKCTELRTEFDEAAIMTATPDLSPLTRPAHIMSQHYNRFLKLLERWPVDQSKIGRDLGQYLRDQLKAVLGGTNIIAVKDERLVRQHQSLENIVNDVHLKAHPRSLNSTATGLSGEQCREVLSSEFLEYLNKEGGFEKLGLRGGRWMSTEAVRHVPVMAAEAIKFLKPQDSELFIDMTFGAGGHTKQILKAAPNAKIITLDRDPVAHELAQEMAKRYPGQIYPVLGRFSELPAKLKELNVNQRSIDGMIFDFGCSSMQFDEGERGFSISKNGPLDMRMDKDRCPDAPSAADVLARIDEMDLARILKVYGEEKFAKRIARAIVEARHSIKKIETTKELAELVQTCCASEFRLDKLQRPSHPATKTFQALRIFVNNELNEINYGMILAQHYLKIGGKMITITFHSLEDTIVKRHVMGNVANDMANKLPLKYCSHTICHDQTVMDAALKPNWHQMTKHVVVPSDAEVEENPRSRSAKLRAVVRVE.

Residues 1–28 (MKPRLLTTVTTWLALVLPVVYLSRPCQA) form the signal peptide. Residues 29–365 (LPTVNFTANY…RQSYNDYNLA (337 aa)) are Extracellular-facing. N-linked (GlcNAc...) asparagine glycosylation is found at asparagine 33, asparagine 40, asparagine 146, asparagine 182, asparagine 248, asparagine 294, and asparagine 306. 2 Fibronectin type-III domains span residues 143-242 (KPLN…AGPS) and 243-346 (APKV…VQLN). Residues 366–386 (VMIGILICCFGLLFIVLTILL) form a helical membrane-spanning segment. Topologically, residues 387-1479 (WKKCFHAAYY…AKLRAVVRVE (1093 aa)) are cytoplasmic. Tyrosine-protein phosphatase domains lie at 452–717 (FSKE…LVEA) and 740–992 (IDSQ…LSYM). Cysteine 658 serves as the catalytic Phosphocysteine intermediate.

It belongs to the protein-tyrosine phosphatase family. Receptor class subfamily. As to quaternary structure, interacts with C-type lectin mosGCTL-1. Interacts with C-type lectin mosGCTL-7.

It localises to the cell membrane. It catalyses the reaction O-phospho-L-tyrosyl-[protein] + H2O = L-tyrosyl-[protein] + phosphate. Functionally, putative protein tyrosine-protein phosphatase. (Microbial infection) Facilitates West Nile virus infection in mosquitoes. The polypeptide is Putative receptor-type tyrosine-protein phosphatase mosPTP-1 (Culex quinquefasciatus (Southern house mosquito)).